Consider the following 379-residue polypeptide: S-adenosylmethionine decarboxylase proenzyme (379 aa).

Active-site residues include glutamate 30 and glutamate 33. The Schiff-base intermediate with substrate; via pyruvic acid role is filled by serine 96. Serine 96 carries the pyruvic acid (Ser); by autocatalysis modification. Cysteine 110 functions as the Proton donor; for catalytic activity in the catalytic mechanism. Catalysis depends on proton acceptor; for processing activity residues serine 254 and histidine 267.

It belongs to the eukaryotic AdoMetDC family. In terms of assembly, heterotetramer of two alpha and two beta chains. The cofactor is pyruvate. In terms of processing, is synthesized initially as an inactive proenzyme. Formation of the active enzyme involves a self-maturation process in which the active site pyruvoyl group is generated from an internal serine residue via an autocatalytic post-translational modification. Two non-identical subunits are generated from the proenzyme in this reaction, and the pyruvate is formed at the N-terminus of the alpha chain, which is derived from the carboxyl end of the proenzyme. The post-translation cleavage follows an unusual pathway, termed non-hydrolytic serinolysis, in which the side chain hydroxyl group of the serine supplies its oxygen atom to form the C-terminus of the beta chain, while the remainder of the serine residue undergoes an oxidative deamination to produce ammonia and the pyruvoyl group blocking the N-terminus of the alpha chain.

The enzyme catalyses S-adenosyl-L-methionine + H(+) = S-adenosyl 3-(methylsulfanyl)propylamine + CO2. It functions in the pathway amine and polyamine biosynthesis; S-adenosylmethioninamine biosynthesis; S-adenosylmethioninamine from S-adenosyl-L-methionine: step 1/1. S-adenosylmethionine decarboxylase is essential for the biosynthesis of spermine and spermidine. The alpha subunit contains the active site. The sequence is that of S-adenosylmethionine decarboxylase proenzyme (amd1) from Dictyostelium discoideum (Social amoeba).